Reading from the N-terminus, the 410-residue chain is Mating-type locus allele B7 protein (410 aa).

Residues 1–110 form a variable domain between B alleles region; it reads MSSDPNFSLT…VNVGSPAVGC (110 aa). Positions 107-184 form a DNA-binding region, homeobox; TALE-type; that stretch reads AVGCRNLSED…NARRRSGWSH (78 aa). A highly conserved between B alleles region spans residues 111-410; it reads RNLSEDLPAY…PFLCLSVAFV (300 aa). 3 disordered regions span residues 202–225, 278–336, and 374–394; these read RAKL…SNNL, TPKP…PELS, and ARGN…QPDE. The short motif at 276–308 is the Nuclear localization signal element; it reads KKTPKPGMPRPVTTVAKRQPARKTKPAAKPNSR. Over residues 306–336 the composition is skewed to polar residues; it reads NSRTANPRASTTPSIDSTLDSSKLESTPELS. The interval 333–410 is not essential for B7 function; the sequence is PELSMCSTAD…PFLCLSVAFV (78 aa). A compositionally biased stretch (basic residues) spans 375-388; the sequence is RGNRKVKALPKRAG.

It belongs to the TALE/M-ATYP homeobox family.

Its subcellular location is the nucleus. The B locus has at least 25 alleles, and any combination of two different B alleles yields a multimeric regulatory protein, that activates genes responsible for the pathogenicity and for the sexual development of the fungus within the corn plant. This chain is Mating-type locus allele B7 protein, found in Mycosarcoma maydis (Corn smut fungus).